Reading from the N-terminus, the 455-residue chain is Phosphoglucosamine mutase (455 aa).

S104 serves as the catalytic Phosphoserine intermediate. Mg(2+)-binding residues include S104, D243, D245, and D247. S104 is modified (phosphoserine).

This sequence belongs to the phosphohexose mutase family. Mg(2+) is required as a cofactor. In terms of processing, activated by phosphorylation.

It carries out the reaction alpha-D-glucosamine 1-phosphate = D-glucosamine 6-phosphate. Catalyzes the conversion of glucosamine-6-phosphate to glucosamine-1-phosphate. This chain is Phosphoglucosamine mutase, found in Synechococcus sp. (strain CC9311).